Reading from the N-terminus, the 376-residue chain is Transmembrane protein 43 homolog (376 aa).

At 1 to 10 (MASLSETLRS) the chain is on the cytoplasmic side. Residues 11–31 (HWPIALFGVILFVAGGTELYW) traverse the membrane as a helical segment. The Lumenal portion of the chain corresponds to 32-277 (NEGRAVHNMM…EVFRLEARAQ (246 aa)). The helical transmembrane segment at 278–298 (VLHTWWWRFVGWLLIFFGVTC) threads the bilayer. The Cytoplasmic portion of the chain corresponds to 299–323 (NTKILRLLFVRVPLLVALAPDPQFP). A run of 2 helical transmembrane segments spans residues 324 to 344 (VTGN…VAWI) and 345 to 365 (LHRP…YVWF). Residues 366–376 (TRNLVDYHRLD) are Cytoplasmic-facing.

It belongs to the TMEM43 family.

The protein resides in the endoplasmic reticulum membrane. It is found in the nucleus envelope. Involved in lipid metabolism and utilization. This chain is Transmembrane protein 43 homolog, found in Drosophila melanogaster (Fruit fly).